Reading from the N-terminus, the 393-residue chain is Leucine aminopeptidase 1 (393 aa).

The first 18 residues, 1 to 18 (MKLSQVSALAACVPAATA), serve as a signal peptide directing secretion. The propeptide occupies 19-84 (RFVELMEADH…GSQGLRIKES (66 aa)). An N-linked (GlcNAc...) asparagine glycan is attached at Asn176. Residues His184, Asp202, Glu241, and Asp268 each contribute to the Zn(2+) site. Cys317 and Cys321 form a disulfide bridge. His350 lines the Zn(2+) pocket.

Belongs to the peptidase M28 family. M28E subfamily. As to quaternary structure, monomer. Zn(2+) serves as cofactor.

Its subcellular location is the secreted. Its function is as follows. Extracellular aminopeptidase that allows assimilation of proteinaceous substrates. This chain is Leucine aminopeptidase 1 (LAP1), found in Metarhizium robertsii (strain ARSEF 23 / ATCC MYA-3075) (Metarhizium anisopliae (strain ARSEF 23)).